Here is a 186-residue protein sequence, read N- to C-terminus: Nucleoside triphosphate pyrophosphatase (186 aa).

Residue D68 is the Proton acceptor of the active site.

It belongs to the Maf family. It depends on a divalent metal cation as a cofactor.

The protein localises to the cytoplasm. The enzyme catalyses a ribonucleoside 5'-triphosphate + H2O = a ribonucleoside 5'-phosphate + diphosphate + H(+). It catalyses the reaction a 2'-deoxyribonucleoside 5'-triphosphate + H2O = a 2'-deoxyribonucleoside 5'-phosphate + diphosphate + H(+). Its function is as follows. Nucleoside triphosphate pyrophosphatase. May have a dual role in cell division arrest and in preventing the incorporation of modified nucleotides into cellular nucleic acids. This is Nucleoside triphosphate pyrophosphatase from Prochlorococcus marinus (strain MIT 9303).